A 137-amino-acid chain; its full sequence is Small ribosomal subunit protein bS16m (137 aa).

The N-terminal 34 residues, 1–34 (MVHLTTLLCKAYRGGHLTIRLALGGCTNRPFYRI), are a transit peptide targeting the mitochondrion. At T130 the chain carries Phosphothreonine.

This sequence belongs to the bacterial ribosomal protein bS16 family. As to quaternary structure, component of the mitochondrial ribosome small subunit (28S) which comprises a 12S rRNA and about 30 distinct proteins.

It localises to the mitochondrion. In Pongo abelii (Sumatran orangutan), this protein is Small ribosomal subunit protein bS16m (MRPS16).